Here is a 253-residue protein sequence, read N- to C-terminus: Zinc import ATP-binding protein ZnuC (253 aa).

Residues 6–227 form the ABC transporter domain; sequence VTLNKISVTF…FGNRGAEQLA (222 aa). Residue 38–45 participates in ATP binding; that stretch reads GPNGAGKS.

The protein belongs to the ABC transporter superfamily. Zinc importer (TC 3.A.1.15.5) family. In terms of assembly, the complex is composed of two ATP-binding proteins (ZnuC), two transmembrane proteins (ZnuB) and a solute-binding protein (ZnuA).

It is found in the cell inner membrane. The enzyme catalyses Zn(2+)(out) + ATP(in) + H2O(in) = Zn(2+)(in) + ADP(in) + phosphate(in) + H(+)(in). Functionally, part of the ABC transporter complex ZnuABC involved in zinc import. Responsible for energy coupling to the transport system. The polypeptide is Zinc import ATP-binding protein ZnuC (Yersinia pestis bv. Antiqua (strain Antiqua)).